Here is a 315-residue protein sequence, read N- to C-terminus: Prephenate dehydratase (315 aa).

The Prephenate dehydratase domain occupies 3-190 (RIAYLGPQGT…ARTRFVLVGR (188 aa)). In terms of domain architecture, ACT spans 204–281 (SVALRLPNTP…EDVRYLGSWP (78 aa)).

In terms of assembly, homodimer.

It catalyses the reaction prephenate + H(+) = 3-phenylpyruvate + CO2 + H2O. Its pathway is amino-acid biosynthesis; L-phenylalanine biosynthesis; phenylpyruvate from prephenate: step 1/1. The protein is Prephenate dehydratase (pheA) of Mycobacterium sp. (strain JLS).